The chain runs to 324 residues: Ribosomal RNA small subunit methyltransferase H (324 aa).

S-adenosyl-L-methionine contacts are provided by residues 47-49 (GGH), Asp67, Leu96, Asp115, and Gln122.

This sequence belongs to the methyltransferase superfamily. RsmH family.

It is found in the cytoplasm. It catalyses the reaction cytidine(1402) in 16S rRNA + S-adenosyl-L-methionine = N(4)-methylcytidine(1402) in 16S rRNA + S-adenosyl-L-homocysteine + H(+). In terms of biological role, specifically methylates the N4 position of cytidine in position 1402 (C1402) of 16S rRNA. The sequence is that of Ribosomal RNA small subunit methyltransferase H from Halorhodospira halophila (strain DSM 244 / SL1) (Ectothiorhodospira halophila (strain DSM 244 / SL1)).